The following is a 164-amino-acid chain: Phosphopantetheine adenylyltransferase (164 aa).

Threonine 9 is a substrate binding site. Residues 9–10 (TF) and histidine 17 each bind ATP. Positions 41, 73, and 87 each coordinate substrate. Residues 88–90 (GLR), glutamate 98, and 123–129 (YMFISAT) each bind ATP.

This sequence belongs to the bacterial CoaD family. In terms of assembly, homohexamer. The cofactor is Mg(2+).

Its subcellular location is the cytoplasm. The enzyme catalyses (R)-4'-phosphopantetheine + ATP + H(+) = 3'-dephospho-CoA + diphosphate. It functions in the pathway cofactor biosynthesis; coenzyme A biosynthesis; CoA from (R)-pantothenate: step 4/5. In terms of biological role, reversibly transfers an adenylyl group from ATP to 4'-phosphopantetheine, yielding dephospho-CoA (dPCoA) and pyrophosphate. The chain is Phosphopantetheine adenylyltransferase from Nitrosomonas eutropha (strain DSM 101675 / C91 / Nm57).